Consider the following 381-residue polypeptide: GDP-mannose transporter (381 aa).

Topologically, residues 1 to 40 (MADDKKTNDYTVEMDKLDQGSKNFEAPLPPVQPRSAPNAQ) are cytoplasmic. A helical membrane pass occupies residues 41–61 (LANNPILPVLAYCGSSIMMTV). The Lumenal segment spans residues 62–71 (MNKYVLSGTD). The helical transmembrane segment at 72-92 (FNLNFLLLCVQSIVCIVAIQT) threads the bilayer. The Cytoplasmic portion of the chain corresponds to 93–110 (CKASKLITYRDFNADEAK). The chain crosses the membrane as a helical span at residues 111–127 (KWFPITLLLIGMIYTGS). Residues 128–134 (KALQFLS) lie on the Lumenal side of the membrane. The chain crosses the membrane as a helical span at residues 135 to 151 (IPVYTIFKNLTIILIAY). The Cytoplasmic segment spans residues 152 to 160 (GEVLWFGGS). A helical transmembrane segment spans residues 161 to 182 (VTGLTLFSFGLMVLSSIIAAWA). At 183 to 200 (DIKHAVESSGDATAKVST) the chain is on the lumenal side. The chain crosses the membrane as a helical span at residues 201-221 (LNAGYIWMLINCLCTSSYVLG). Topologically, residues 222–233 (MRKRIKLTNFKD) are cytoplasmic. Residues 234–254 (FDTMFYNNLLSIPVLLVLTFL) form a helical membrane-spanning segment. Topologically, residues 255–274 (MEDWSSANITRNFPPADRNG) are lumenal. An N-linked (GlcNAc...) asparagine glycan is attached at N262. A helical membrane pass occupies residues 275–295 (IMFAMILSGLSSVFISYTSAW). Residues 296–303 (CVRVTSST) lie on the Cytoplasmic side of the membrane. The chain crosses the membrane as a helical span at residues 304-324 (TYSMVGALNKLPIAVSGLIFF). The Lumenal segment spans residues 325–327 (DAP). The helical transmembrane segment at 328–348 (VTFPSVSAIVVGFVSGIVYAV) threads the bilayer. At 349–381 (AKIKQNAKPKTGVLPTSNPVSASSQSMRDSLRS) the chain is on the cytoplasmic side. Positions 362–381 (LPTSNPVSASSQSMRDSLRS) are disordered.

This sequence belongs to the TPT transporter family. SLC35D subfamily. As to quaternary structure, homooligomer.

It is found in the golgi apparatus membrane. The protein localises to the cytoplasmic vesicle membrane. It localises to the endoplasmic reticulum membrane. Functionally, involved in the import of GDP-mannose from the cytoplasm into the Golgi lumen. In Aspergillus clavatus (strain ATCC 1007 / CBS 513.65 / DSM 816 / NCTC 3887 / NRRL 1 / QM 1276 / 107), this protein is GDP-mannose transporter (gmt1).